The following is an 83-amino-acid chain: Cytochrome b559 subunit alpha (83 aa).

The chain crosses the membrane as a helical span at residues 21–35 (VIHSITIPSLFIAGW). His-23 serves as a coordination point for heme.

The protein belongs to the PsbE/PsbF family. As to quaternary structure, heterodimer of an alpha subunit and a beta subunit. PSII is composed of 1 copy each of membrane proteins PsbA, PsbB, PsbC, PsbD, PsbE, PsbF, PsbH, PsbI, PsbJ, PsbK, PsbL, PsbM, PsbT, PsbX, PsbY, PsbZ, Psb30/Ycf12, at least 3 peripheral proteins of the oxygen-evolving complex and a large number of cofactors. It forms dimeric complexes. Heme b serves as cofactor.

Its subcellular location is the plastid. It is found in the chloroplast thylakoid membrane. Its function is as follows. This b-type cytochrome is tightly associated with the reaction center of photosystem II (PSII). PSII is a light-driven water:plastoquinone oxidoreductase that uses light energy to abstract electrons from H(2)O, generating O(2) and a proton gradient subsequently used for ATP formation. It consists of a core antenna complex that captures photons, and an electron transfer chain that converts photonic excitation into a charge separation. This chain is Cytochrome b559 subunit alpha, found in Chaetosphaeridium globosum (Charophycean green alga).